Reading from the N-terminus, the 532-residue chain is MRKTVAFGFVGTVLDYAGRGSQRWSKWRPTLCLCQQESLVIDRLELLHDARSRSLFETLKRDIASVSPETEVVSVEIELHNPWDFEEVYACLHDFARGYEFQPEKEDYLIHITTGTHVAQICWFLLAEARYLPARLIQSSPPRKKEQPRGPGEVTIIDLDLSRYNAIASRFAEERQQTLDFLKSGIATRNPHFNRMIEQIEKVAIKSRAPILLNGPTGAGKSFLARRILELKQARHQFSGAFVEVNCATLRGDTAMSTLFGHVKGAFTGARESREGLLRSANGGMLFLDEIGELGADEQAMLLKAIEEKTFYPFGSDRQVSSDFQLIAGTVRDLRQLVAEGKFREDLYARINLWTFTLPGLRQRQEDIEPNLDYEVERHASLTGDSVRFNTEARRAWLAFATSPQATWRGNFRELSASVTRMATFATSGRITLDVVEDEINRLRYNWQESRPSALTALLGAEAENIDLFDRMQLEHVIAICRQAKSLSAAGRQLFDVSRQGKASVNDADRLRKYLARFGLTWEAVQDQHSSS.

The region spanning 186–424 (IATRNPHFNR…LSASVTRMAT (239 aa)) is the Sigma-54 factor interaction domain. Residues 215–222 (GPTGAGKS) and 281–290 (ANGGMLFLDE) contribute to the ATP site. Residues 485–504 (KSLSAAGRQLFDVSRQGKAS) constitute a DNA-binding region (H-T-H motif).

Its function is as follows. Transcriptional repressor of the rtcAB genes. Interacts with sigma-54. The sequence is that of Transcriptional regulatory protein RtcR (rtcR) from Escherichia coli (strain K12).